The following is an 88-amino-acid chain: Small ribosomal subunit protein uS15 (88 aa).

This sequence belongs to the universal ribosomal protein uS15 family. As to quaternary structure, part of the 30S ribosomal subunit. Forms a bridge to the 50S subunit in the 70S ribosome, contacting the 23S rRNA.

Its function is as follows. One of the primary rRNA binding proteins, it binds directly to 16S rRNA where it helps nucleate assembly of the platform of the 30S subunit by binding and bridging several RNA helices of the 16S rRNA. In terms of biological role, forms an intersubunit bridge (bridge B4) with the 23S rRNA of the 50S subunit in the ribosome. The polypeptide is Small ribosomal subunit protein uS15 (Geobacter metallireducens (strain ATCC 53774 / DSM 7210 / GS-15)).